Consider the following 100-residue polypeptide: Urease subunit gamma (100 aa).

It belongs to the urease gamma subunit family. In terms of assembly, heterotrimer of UreA (gamma), UreB (beta) and UreC (alpha) subunits. Three heterotrimers associate to form the active enzyme.

It localises to the cytoplasm. The enzyme catalyses urea + 2 H2O + H(+) = hydrogencarbonate + 2 NH4(+). The protein operates within nitrogen metabolism; urea degradation; CO(2) and NH(3) from urea (urease route): step 1/1. The protein is Urease subunit gamma of Photorhabdus laumondii subsp. laumondii (strain DSM 15139 / CIP 105565 / TT01) (Photorhabdus luminescens subsp. laumondii).